The sequence spans 697 residues: MAR-binding filament-like protein 1 (697 aa).

A chloroplast-targeting transit peptide spans 1–41 (MATSCFPPFSASSSSLCSSQFTPLLSCPRNTQICRKKRPVM). The N-terminal 38 residues, 42 to 79 (ASMHSENQKESNVCNRRSILFVGFSVLPLLNLRARALE), are a transit peptide targeting the thylakoid. Topologically, residues 80-106 (GLSTDSQAQPQKEETEQTIQGSAGNPF) are lumenal, thylakoid. The segment at 81 to 100 (LSTDSQAQPQKEETEQTIQG) is disordered. Residues 107–127 (VSLLNGLGVVGSGVLGSLYAL) form a helical membrane-spanning segment. Topologically, residues 128–697 (ARNEKAVSDA…GEKEKVNVQQ (570 aa)) are stromal. Residues 203-671 (LQNEKKLAED…KGEILRLRSQ (469 aa)) are a coiled coil. Positions 599-629 (TSRNSSLEDEREVHRQSVSEQKQISQEAQEN) are disordered. Residues 604 to 615 (SLEDEREVHRQS) show a composition bias toward basic and acidic residues. Residues 616–627 (VSEQKQISQEAQ) show a composition bias toward polar residues.

As to quaternary structure, interacts with MAF1. Interacts with PTST2; the interaction is essential for the initiation of starch granules biosynthesis in leaf chloroplasts, for the correct location of the process in the stromal spaces between the thylakoid membranes, and for the association of PTST2 with the thylakoid membranes. In terms of processing, phosphorylated in vitro by human casein kinase II. Predicted to be translocated into the thylakoid by the Tat system.

It localises to the plastid. Its subcellular location is the chloroplast. The protein localises to the chloroplast thylakoid membrane. It is found in the chloroplast stroma. The protein resides in the chloroplast nucleoid. It localises to the nucleus. Its subcellular location is the nucleus matrix. Its function is as follows. Required for the initiation of starch granules biosynthesis in leaf chloroplasts. Anchored to the thylakoid membranes with its C-terminus facing into the stroma where it is essential for localizing PTST2 and SS4 to the stromal spaces between the thylakoid membranes in order to begin starch granule formation. Associated with leaf chloroplastic nucleoids in vivo. Binds to various chloroplastic double-stranded DNA fragments without particular sequence specificity in vitro. May function at the interface between nucleoids and thylakoids possibly by anchoring nucleoids to the thylakoid membrane system in mature chloroplasts. Binds nuclear DNA. Interacts with chromatin via matrix attachment regions (MARs). Likely to participate in nuclear architecture by connecting chromatin with the nuclear matrix and potentially with the nuclear envelope. The chain is MAR-binding filament-like protein 1 from Solanum lycopersicum (Tomato).